A 196-amino-acid chain; its full sequence is RNA-binding protein with multiple splicing (196 aa).

An N-acetylmethionine modification is found at Met1. Thr12 carries the phosphothreonine modification. Residues 24-101 form the RRM domain; sequence RTLFVSGLPL…QTLRLEFAKA (78 aa). Residues 98–105 form an interaction with RNA region; sequence FAKANTKM. Thr113 bears the Phosphothreonine mark.

As to quaternary structure, homodimer; each protein chain binds one RNA molecule via the external surface of the homodimer. Interacts with RNA binding proteins MBNL1, RBFOX2, RBM4 and RBM14; the interaction allows cooperative assembly of stable cell-specific alternative splicing regulatory complexes. Interacts with SMAD2, SMAD3 and SMAD4; the interactions are direct. Ubiquitously expressed, at various levels depending on the isoform and the tissue. Strongly expressed in the heart, prostate, small intestine, large intestine, and ovary; moderately expressed in the placenta, lung, liver, kidney, pancreas, and testis; and poorly expressed in the skeletal muscle, spleen, thymus and peripheral leukocytes.

The protein localises to the nucleus. It is found in the cytoplasm. The protein resides in the stress granule. Its subcellular location is the P-body. In terms of biological role, RNA binding protein that mediates the regulation of pre-mRNA alternative splicing (AS). Acts either as activator (FLNB, HSPG2, LIPA1, MYOCD, PTPRF and PPFIBP1) or repressor (TPM1, ACTN1, ITGA7, PIEZO1, LSM14B, MBNL1 and MBML2) of splicing events on specific pre-mRNA targets. Together with RNA binding proteins RBFOX2 and MBNL1/2, activates a splicing program associated with differentiated contractile vascular smooth muscle cells (SMC) by regulating AS of numerous pre-mRNA involved in actin cytoskeleton and focal adhesion machineries, suggesting a role in promoting a cell differentiated state. Binds to introns, exons and 3'-UTR associated with tandem CAC trinucleotide motifs separated by a variable spacer region, at a minimum as a dimer. The minimal length of RNA required for RBPMS-binding tandem CAC motifs is 15 nt, with spacing ranging from 1 to 9 nt. Can also bind to CA dinucleotide repeats. Mediates repression of TPM1 exon 3 by binding to CAC tandem repeats in the flanking intronic regions, followed by higher-order oligomerization and heterotypic interactions with other splicing regulators including MBNL1 and RBFOX2, which prevents assembly of ATP-dependent splicing complexes. Functionally, acts as a regulator of pre-mRNA alternative splicing (AS). Binds mRNA. Regulates AS of ACTN1, FLNB, although with lower efficiency than isoform A / RBPMSA. Acts as coactivator of SMAD transcriptional activity in a TGFB1-dependent manner, possibly through increased phosphorylation of SMAD2 and SMAD3 at the C-terminal SSXS regions and promotion of the nuclear accumulation of SMAD proteins. The polypeptide is RNA-binding protein with multiple splicing (Homo sapiens (Human)).